Here is a 331-residue protein sequence, read N- to C-terminus: Tetraacyldisaccharide 4'-kinase (331 aa).

60–67 lines the ATP pocket; the sequence is TVGGTGKT.

The protein belongs to the LpxK family.

It carries out the reaction a lipid A disaccharide + ATP = a lipid IVA + ADP + H(+). The protein operates within glycolipid biosynthesis; lipid IV(A) biosynthesis; lipid IV(A) from (3R)-3-hydroxytetradecanoyl-[acyl-carrier-protein] and UDP-N-acetyl-alpha-D-glucosamine: step 6/6. In terms of biological role, transfers the gamma-phosphate of ATP to the 4'-position of a tetraacyldisaccharide 1-phosphate intermediate (termed DS-1-P) to form tetraacyldisaccharide 1,4'-bis-phosphate (lipid IVA). This chain is Tetraacyldisaccharide 4'-kinase, found in Pseudomonas syringae pv. syringae (strain B728a).